The primary structure comprises 115 residues: Vitelline membrane protein Vm32E (115 aa).

An N-terminal signal peptide occupies residues 1–17 (MKIVAFTLVAFVALAGA). Residues 35 to 72 (GYPAPPCPTNYLFSCQPNLAPAPCAQEAPAYGSAGAYT) enclose the VM domain.

This sequence belongs to the vitelline membrane family.

The protein resides in the secreted. Functionally, major early eggshell protein. This is Vitelline membrane protein Vm32E from Drosophila yakuba (Fruit fly).